We begin with the raw amino-acid sequence, 137 residues long: Putative pre-16S rRNA nuclease (137 aa).

This sequence belongs to the YqgF nuclease family.

Its subcellular location is the cytoplasm. Its function is as follows. Could be a nuclease involved in processing of the 5'-end of pre-16S rRNA. The sequence is that of Putative pre-16S rRNA nuclease from Bacillus cytotoxicus (strain DSM 22905 / CIP 110041 / 391-98 / NVH 391-98).